Consider the following 140-residue polypeptide: Sex-regulated protein janus-B (140 aa).

A substrate-binding site is contributed by R42. H69 (proton acceptor) is an active-site residue. Residue 110–112 (SRT) coordinates substrate.

This sequence belongs to the janus family.

JanA and janB regulate somatic sex differentiation. This is Sex-regulated protein janus-B (janB) from Drosophila sechellia (Fruit fly).